A 468-amino-acid chain; its full sequence is Na(+)/H(+) antiporter NhaA 2 (468 aa).

Helical transmembrane passes span 31–51, 82–102, 118–138, 147–167, 176–196, 199–219, 226–246, 321–341, 353–373, 393–413, and 422–442; these read FLHVQAASGIVLLIATAVALA, LHFWINDGLMTIFFFVVGLEI, VLPVAAALGGMLFPALIYLAL, GWGVPMATDIAFAVGALALLG, VLLLALAIIDDIGAILVIAVF, SSISVTGFGLVAVGIAGVLAL, SPVVYAAAGVVIWAGLLSAGV, PWVAYGIMPLFALANAGVSLG, LLLGVVFGLTMGKPLGIMVAC, VLVVGCVAGIGFTMAIFVAGL, and GVAKLAVLLGSLISALVAMAV.

The protein belongs to the NhaA Na(+)/H(+) (TC 2.A.33) antiporter family.

The protein resides in the cell inner membrane. It catalyses the reaction Na(+)(in) + 2 H(+)(out) = Na(+)(out) + 2 H(+)(in). Its function is as follows. Na(+)/H(+) antiporter that extrudes sodium in exchange for external protons. This chain is Na(+)/H(+) antiporter NhaA 2, found in Sorangium cellulosum (strain So ce56) (Polyangium cellulosum (strain So ce56)).